The chain runs to 571 residues: Quinone-dependent D-lactate dehydrogenase (571 aa).

The FAD-binding PCMH-type domain occupies 44 to 273; the sequence is GGGPVFAVVR…FAVRTRTFPR (230 aa). Residues 78-82, 86-87, Gly145, Ser152, Gly162, and Val263 each bind FAD; these read ASNTG and GS.

It belongs to the quinone-dependent D-lactate dehydrogenase family. FAD is required as a cofactor.

The protein localises to the cell membrane. The enzyme catalyses (R)-lactate + a quinone = a quinol + pyruvate. Its function is as follows. Catalyzes the oxidation of D-lactate to pyruvate. Also has weak activity with L-lactate and DL-2-hydroxybutyrate. Electrons derived from D-lactate oxidation enter the electron transport chain. Essential for growth with D-lactate as sole carbon and energy source. This chain is Quinone-dependent D-lactate dehydrogenase, found in Corynebacterium glutamicum (strain ATCC 13032 / DSM 20300 / JCM 1318 / BCRC 11384 / CCUG 27702 / LMG 3730 / NBRC 12168 / NCIMB 10025 / NRRL B-2784 / 534).